Consider the following 429-residue polypeptide: Histidine--tRNA ligase (429 aa).

This sequence belongs to the class-II aminoacyl-tRNA synthetase family. Homodimer.

Its subcellular location is the cytoplasm. The catalysed reaction is tRNA(His) + L-histidine + ATP = L-histidyl-tRNA(His) + AMP + diphosphate + H(+). The sequence is that of Histidine--tRNA ligase from Streptococcus pneumoniae serotype 2 (strain D39 / NCTC 7466).